A 574-amino-acid polypeptide reads, in one-letter code: Developmental and secondary metabolism regulator veA (574 aa).

Disordered regions lie at residues 1-22 (MATR…SRIT), 39-60 (ERAR…VDPP), 255-500 (RSSD…GAGK), and 513-540 (RSYE…YPRR). In terms of domain architecture, Velvet spans 25-230 (GKKLTYKLNV…AEQGCRVRIR (206 aa)). The Nuclear localization signal motif lies at 39-44 (ERARAC). Pro residues-rich tracts occupy residues 314–323 (RPLPPAPGPA) and 330–341 (PAPPAPPAPPSH). Polar residues-rich tracts occupy residues 343–353 (PGYQSHLSFGS), 385–394 (HARNPSTSAE), 406–415 (RMSTERSSYP), and 448–458 (VAQSAAPRSQT). Residues 457–501 (QTPSSSLVPSLPPLKALSGDYPNNLSQSSSSTSQSPSHDLGAGKK) form a PEST region. Composition is skewed to low complexity over residues 459-474 (PSSS…KALS) and 482-493 (SQSSSSTSQSPS). Residues 513–525 (RSYEDSFGHDDRP) are compositionally biased toward basic and acidic residues.

It belongs to the velvet family. VeA subfamily. As to quaternary structure, component of the heterotrimeric velvet complex composed of laeA, veA and velB; VeA acting as a bridging protein between laeA and velB.

The protein localises to the nucleus. It localises to the cytoplasm. Functionally, component of the velvet transcription factor complex that controls sexual/asexual developmental ratio in response to light, promoting sexual development in the darkness while stimulating asexual sporulation under illumination. The velvet complex hat acts as a global regulator for secondary metabolite gene expression. Controls the expression of the penicillin gene cluster. The polypeptide is Developmental and secondary metabolism regulator veA (Aspergillus oryzae (strain ATCC 42149 / RIB 40) (Yellow koji mold)).